A 339-amino-acid polypeptide reads, in one-letter code: Uroporphyrinogen decarboxylase (339 aa).

Substrate-binding positions include 23 to 27, aspartate 72, tyrosine 147, threonine 202, and histidine 315; that span reads RQAGR.

Belongs to the uroporphyrinogen decarboxylase family. As to quaternary structure, homodimer.

The protein localises to the cytoplasm. The enzyme catalyses uroporphyrinogen III + 4 H(+) = coproporphyrinogen III + 4 CO2. It functions in the pathway porphyrin-containing compound metabolism; protoporphyrin-IX biosynthesis; coproporphyrinogen-III from 5-aminolevulinate: step 4/4. Its function is as follows. Catalyzes the decarboxylation of four acetate groups of uroporphyrinogen-III to yield coproporphyrinogen-III. The chain is Uroporphyrinogen decarboxylase from Citrifermentans bemidjiense (strain ATCC BAA-1014 / DSM 16622 / JCM 12645 / Bem) (Geobacter bemidjiensis).